The primary structure comprises 163 residues: 3-isopropylmalate dehydratase small subunit (163 aa).

Belongs to the LeuD family. LeuD type 2 subfamily. As to quaternary structure, heterodimer of LeuC and LeuD.

The enzyme catalyses (2R,3S)-3-isopropylmalate = (2S)-2-isopropylmalate. Its pathway is amino-acid biosynthesis; L-leucine biosynthesis; L-leucine from 3-methyl-2-oxobutanoate: step 2/4. Functionally, catalyzes the isomerization between 2-isopropylmalate and 3-isopropylmalate, via the formation of 2-isopropylmaleate. This is 3-isopropylmalate dehydratase small subunit from Ruminiclostridium cellulolyticum (strain ATCC 35319 / DSM 5812 / JCM 6584 / H10) (Clostridium cellulolyticum).